Here is a 453-residue protein sequence, read N- to C-terminus: Phenylalanine-4-hydroxylase (453 aa).

Residue alanine 2 is modified to N-acetylalanine. Serine 16 is modified (phosphoserine; by PKA). An ACT domain is found at 36 to 114; sequence SLIFSLKEEV…TVHELSRDKE (79 aa). Positions 285, 290, and 330 each coordinate Fe cation.

It belongs to the biopterin-dependent aromatic amino acid hydroxylase family. As to quaternary structure, homodimer and homotetramer. The cofactor is Fe(2+). Post-translationally, phosphorylation at Ser-16 increases basal activity and facilitates activation by the substrate phenylalanine.

It carries out the reaction (6R)-L-erythro-5,6,7,8-tetrahydrobiopterin + L-phenylalanine + O2 = (4aS,6R)-4a-hydroxy-L-erythro-5,6,7,8-tetrahydrobiopterin + L-tyrosine. It functions in the pathway amino-acid degradation; L-phenylalanine degradation; acetoacetate and fumarate from L-phenylalanine: step 1/6. Its activity is regulated as follows. N-terminal region of PAH is thought to contain allosteric binding sites for phenylalanine and to constitute an 'inhibitory' domain that regulates the activity of a catalytic domain in the C-terminal portion of the molecule. In terms of biological role, catalyzes the hydroxylation of L-phenylalanine to L-tyrosine. The polypeptide is Phenylalanine-4-hydroxylase (Pah) (Rattus norvegicus (Rat)).